Here is a 102-residue protein sequence, read N- to C-terminus: Small ribosomal subunit protein uS14 (102 aa).

The protein belongs to the universal ribosomal protein uS14 family. As to quaternary structure, part of the 30S ribosomal subunit. Contacts proteins S3 and S10.

Functionally, binds 16S rRNA, required for the assembly of 30S particles and may also be responsible for determining the conformation of the 16S rRNA at the A site. In Wolbachia pipientis wMel, this protein is Small ribosomal subunit protein uS14.